Reading from the N-terminus, the 144-residue chain is Small ribosomal subunit protein bS6 (144 aa).

The tract at residues 95 to 144 (ELEEGPSAMMQSKSRDDRPRRGEGDDRPRRDDREDRPRRDREPRRMEGGE) is disordered. Basic and acidic residues predominate over residues 107-144 (KSRDDRPRRGEGDDRPRRDDREDRPRRDREPRRMEGGE).

Belongs to the bacterial ribosomal protein bS6 family.

Its function is as follows. Binds together with bS18 to 16S ribosomal RNA. This Paramagnetospirillum magneticum (strain ATCC 700264 / AMB-1) (Magnetospirillum magneticum) protein is Small ribosomal subunit protein bS6.